A 235-amino-acid polypeptide reads, in one-letter code: Small ribosomal subunit protein uS3 (235 aa).

The KH type-2 domain maps to 39–107 (IREILHKELK…DVVINIVEIR (69 aa)). Residues 215 to 235 (QDKRMAEGDGGGSSRPRRDAA) form a disordered region.

Belongs to the universal ribosomal protein uS3 family. In terms of assembly, part of the 30S ribosomal subunit. Forms a tight complex with proteins S10 and S14.

In terms of biological role, binds the lower part of the 30S subunit head. Binds mRNA in the 70S ribosome, positioning it for translation. The protein is Small ribosomal subunit protein uS3 of Rhodopseudomonas palustris (strain ATCC BAA-98 / CGA009).